Consider the following 1746-residue polypeptide: Inactive tyrosine-protein kinase PEAK1 (1746 aa).

The interval Lys44–Ala66 is disordered. Residue Ser281 is modified to Phosphoserine. 2 disordered regions span residues Gln334 to Glu411 and Leu489 to Gly517. A compositionally biased stretch (low complexity) spans Ser338 to Thr349. Residues Glu355 to Ile364 are compositionally biased toward polar residues. A compositionally biased stretch (low complexity) spans Pro492 to Ser513. 3 positions are modified to phosphoserine: Ser540, Ser572, and Ser587. The interval Ile551 to Asn577 is disordered. Phosphotyrosine occurs at positions 635 and 641. Residue Ser648 is modified to Phosphoserine. Tyr665 carries the phosphotyrosine modification. Disordered regions lie at residues Glu671 to Gly700, Leu713 to Ser764, Asp802 to Ala920, Val1052 to Pro1102, and Gly1138 to Lys1158. Positions Pro675–Ser694 are enriched in polar residues. Residues Ser718–Ser730 are compositionally biased toward low complexity. Polar residues-rich tracts occupy residues Thr748–Ser758 and Leu820–Lys841. Phosphoserine occurs at positions 826 and 854. The segment covering Ser864–Arg874 has biased composition (pro residues). Polar residues predominate over residues His889–Ser902. Ser898 bears the Phosphoserine mark. Basic and acidic residues-rich tracts occupy residues Thr903–Ala920, Val1052–Arg1062, and Glu1084–Ile1094. Thr1151 carries the post-translational modification Phosphothreonine. Tyr1188 bears the Phosphotyrosine mark. The required for homodimerization stretch occupies residues Glu1285–Ala1311. A Protein kinase domain is found at Gln1313–Phe1675. Ser1374 carries the phosphoserine modification. The disordered stretch occupies residues Leu1402–Arg1456. The segment covering Glu1406–Glu1423 has biased composition (acidic residues). Positions Asp1424–Asn1433 are enriched in basic and acidic residues. Polar residues predominate over residues Ala1440–Val1450. Residues Pro1670 to Leu1743 are required for homodimerization.

This sequence belongs to the protein kinase superfamily. Homodimer. Interacts with BCAR1 and CRK. Interacts with PRAG1. Interacts (when phosphorylated at Tyr-1188) with SHC1 (via PID domain). Found in a complex with PPP1CA, PPP1CC, SHC1 and PEAK1. Interacts (when phosphorylated at Tyr-635) with tensin TNS3 (when phosphorylated on the SH2 domain); TNS3 also interacts with integrins ITGB1, ITGB3 and ITGB5 and mediates their association with PEAK1. Interacts with RASAL2 and GRB2. In terms of processing, phosphorylated on tyrosine in a CSK-dependent manner in response to adhesion to fibronectin and to EGF stimulation. Phosphorylation at Tyr-665 by a Src family kinase controls subcellular localization to focal adhesion and focal adhesion dynamics. Phosphorylation at Tyr-1188 is essential for binding to SHC1. Phosphorylation at Tyr-635 promotes interaction with tensin TNS3.

Its subcellular location is the cytoplasm. The protein resides in the cytoskeleton. The protein localises to the cell junction. It is found in the focal adhesion. In terms of biological role, probable catalytically inactive kinase. Scaffolding protein that regulates the cytoskeleton to control cell spreading and migration by modulating focal adhesion dynamics. Acts as a scaffold for mediating EGFR signaling. The polypeptide is Inactive tyrosine-protein kinase PEAK1 (PEAK1) (Homo sapiens (Human)).